Here is a 254-residue protein sequence, read N- to C-terminus: uncharacterized protein (254 aa).

The interval Pro163–Asn182 is disordered. Residues His166–Thr176 are compositionally biased toward basic residues. Residues Ala207–Phe227 traverse the membrane as a helical segment.

The protein belongs to the RL11 family.

The protein localises to the host membrane. This is an uncharacterized protein from Human cytomegalovirus (strain Merlin) (HHV-5).